A 229-amino-acid chain; its full sequence is Cytochrome b6-f complex iron-sulfur subunit, chloroplastic (229 aa).

Residues 1–50 constitute a chloroplast transit peptide; it reads MASSSLSPATQLGSSRSALMAMSSGLFVKPTKMNHQMVRKEKIGLRISCQ. A helical membrane pass occupies residues 68-90; the sequence is LNLLLLGALSLPTGYMLVPYATF. In terms of domain architecture, Rieske spans 115–211; that stretch reads AAEWLKTHGP…ADIDEAGKVL (97 aa). [2Fe-2S] cluster is bound by residues cysteine 157, histidine 159, cysteine 175, and histidine 178. Cysteines 162 and 177 form a disulfide. A Phosphoserine modification is found at serine 196.

It belongs to the Rieske iron-sulfur protein family. In terms of assembly, the 4 large subunits of the cytochrome b6-f complex are cytochrome b6, subunit IV (17 kDa polypeptide, petD), cytochrome f and the Rieske protein, while the 4 small subunits are petG, petL, petM and petN. The complex functions as a dimer. Interacts with PGRL1A. Component of a mitochondrial large protein complex that contains, at least, MIC60, DGS1, TOM40, TOM20 proteins, and petC/RISP. It depends on [2Fe-2S] cluster as a cofactor. As to expression, confined to photosynthetic tissues, with highest levels in flowers. In leaves, mostly localized in mesophyll cells. In stems, confined to the peripheral ring of chlorenchyma and adjoining groups of cells associated with the vascular bundles. In siliques, present in green wall of the fruit and in peduncle but not in the translucide white septum of the seeds.

The protein localises to the plastid. The protein resides in the chloroplast thylakoid membrane. Its subcellular location is the mitochondrion inner membrane. The enzyme catalyses 2 oxidized [plastocyanin] + a plastoquinol + 2 H(+)(in) = 2 reduced [plastocyanin] + a plastoquinone + 4 H(+)(out). Its function is as follows. Essential protein for photoautotrophism. Confers resistance to photo-oxidative damages by contributing to the thermal dissipation of light energy and to lumenal acidification (increase of pH gradient). Component of the cytochrome b6-f complex, which mediates electron transfer between photosystem II (PSII) and photosystem I (PSI), cyclic electron flow around PSI, and state transitions. The sequence is that of Cytochrome b6-f complex iron-sulfur subunit, chloroplastic from Arabidopsis thaliana (Mouse-ear cress).